Here is an 880-residue protein sequence, read N- to C-terminus: MAPSVVPQSAAGGAALQASADDQLTIEMLGAGQEVGRSCCVLKYRGKTIVCDTGVHPAFTGIAALPFIDELDWSTVDAILITHFHLDHAAALTYIMEKTNFRDGHGKVYMTHPTKAVYRFLMSDFVRISNAGNDDNLFDENEMLASWRQIEAVDFHQDVSIAGGLRFTSYHAGHVLGACMFLIEIAGLRILYTGDFSREEDRHLVQAEIPPVKPDVLICESTYGTQTHEPRLDKEHRFTSQIHHIIKRGGRVLLPVFVLGRAQELLLLLDEYWAAHPELHSVPIYYASALAKKCISVYQTYIHTMNDHIRTRFNRRDNPFVFKHISNLRSLEKFEDRGPCVMMASPGFMQSGVSRELLERWAPDKRNGLIVSGYSVEGTMARNILNEPDEIIGINGQKIPRRMSVDYISFSAHVDFAQNSRFIDEIKAQHIVLVHGEQNNMSKLRAALQARFTARGSDVKIHTPRNCEPLVLQFRAQRTAKAIGTIAAKPPAQGDIVDGLLISKDFAYTILDPKDLTDFTGLSTSTIVQRQRVALAVSWEMVRWHLQGMYGRLQEGVDAEEGLRTLRIMGAVDVRQSARHELLVEWVSSIANDMVADSIVALLLGIDSAPSSVKMTMHNHHHHHHHHHHHHPGDAKAEETDDDAEATTEDEEARTPTESAANLPMHPFSEAALVAESEVRAKAATDEAVHRDAYQLAKMEHMAAFLEAHFGQVEELVIPEAPISEEIEESVPKVKVETEREAEKDEAGDESMSTLQPEPDSVTDVDKPELAPPAEQATASPPISIASLFDGEARSALRVFLDEAEAVIDVENLVILASSESFRARVQHLCTLALRSFTSLSDAFYLPQQMGTSLFQGKHSQLATIPEFGEERPSKMVRSS.

His83, His85, Asp87, His88, His174, and Asp195 together coordinate Zn(2+). His413 acts as the Proton donor in catalysis. His435 serves as a coordination point for Zn(2+). The span at 618–631 (HNHHHHHHHHHHHH) shows a compositional bias: basic residues. 2 disordered regions span residues 618-666 (HNHH…LPMH) and 729-783 (ESVP…SPPI). A compositionally biased stretch (acidic residues) spans 639–652 (ETDDDAEATTEDEE). Over residues 730–745 (SVPKVKVETEREAEKD) the composition is skewed to basic and acidic residues.

The protein belongs to the metallo-beta-lactamase superfamily. RNA-metabolizing metallo-beta-lactamase-like family. CPSF2/YSH1 subfamily.

The protein resides in the nucleus. Functionally, component of the cleavage factor I (CF I) involved in pre-mRNA 3'-end processing. This is Endoribonuclease YSH1 (YSH1) from Mycosarcoma maydis (Corn smut fungus).